The primary structure comprises 471 residues: Glutamate--tRNA ligase (471 aa).

The 'HIGH' region motif lies at 9–19 (PSPTGYLHVGG). The 'KMSKS' region motif lies at 237 to 241 (KLSKR). Residue lysine 240 coordinates ATP.

This sequence belongs to the class-I aminoacyl-tRNA synthetase family. Glutamate--tRNA ligase type 1 subfamily. In terms of assembly, monomer.

Its subcellular location is the cytoplasm. The enzyme catalyses tRNA(Glu) + L-glutamate + ATP = L-glutamyl-tRNA(Glu) + AMP + diphosphate. Catalyzes the attachment of glutamate to tRNA(Glu) in a two-step reaction: glutamate is first activated by ATP to form Glu-AMP and then transferred to the acceptor end of tRNA(Glu). The protein is Glutamate--tRNA ligase of Pectobacterium atrosepticum (strain SCRI 1043 / ATCC BAA-672) (Erwinia carotovora subsp. atroseptica).